Consider the following 184-residue polypeptide: MISPNHLILLFCVNCAFLVASDATPKRSPLGTMRFGKRAIADEMTFEEDGYYPSNVMWKRSTVDSSEPVIRDQRTPLGTMRFGKRSAEPFGTMRFGKRNPENDTPFGTMRFGKRASEDALFGTMRFGKREDGNAPFGTMKFGKREAEEPLGTMRFGKRSADDSAPFGTMRFGKRNPLGTMRFGK.

The N-terminal stretch at Met-1–Ala-23 is a signal peptide. Positions Thr-24–Pro-25 are excised as a propeptide. At Phe-35 the chain carries Phenylalanine amide. Residues Ala-39–Gln-73 constitute a propeptide that is removed on maturation. Phenylalanine amide is present on residues Phe-82, Phe-95, Phe-111, and Phe-126. The segment at Phe-90–Arg-110 is disordered. Positions Glu-130–Gly-142 are excised as a propeptide. Residues Leu-150–Lys-184 are disordered. Phenylalanine amide occurs at positions 155, 171, and 182.

The protein belongs to the FARP (FMRFamide related peptide) family. Each flp gene is expressed in a distinct set of neurons. Flp-3 is expressed in the IL1 and PQR neurons.

The protein localises to the secreted. In terms of biological role, FMRFamides and FMRFamide-like peptides are neuropeptides. SAEPFGTMRF-amide inhibits the activity of dissected pharyngeal myogenic muscle system. This Caenorhabditis elegans protein is FMRFamide-like neuropeptides 3.